Consider the following 259-residue polypeptide: L-arginine-binding protein (259 aa).

Residues 1 to 21 form the signal peptide; sequence MKKLALLGALALSVLSLPTFA.

It belongs to the bacterial solute-binding protein 3 family.

The protein localises to the periplasm. Functionally, binds L-arginine with high affinity. Shows no measurable affinity for L-ornithine. The sequence is that of L-arginine-binding protein from Pseudomonas aeruginosa (strain ATCC 15692 / DSM 22644 / CIP 104116 / JCM 14847 / LMG 12228 / 1C / PRS 101 / PAO1).